Here is a 521-residue protein sequence, read N- to C-terminus: Bifunctional purine biosynthesis protein PurH (521 aa).

In terms of domain architecture, MGS-like spans 1–145; the sequence is MIKQALISVS…KNHRDVTVVV (145 aa).

This sequence belongs to the PurH family.

The catalysed reaction is (6R)-10-formyltetrahydrofolate + 5-amino-1-(5-phospho-beta-D-ribosyl)imidazole-4-carboxamide = 5-formamido-1-(5-phospho-D-ribosyl)imidazole-4-carboxamide + (6S)-5,6,7,8-tetrahydrofolate. The enzyme catalyses IMP + H2O = 5-formamido-1-(5-phospho-D-ribosyl)imidazole-4-carboxamide. The protein operates within purine metabolism; IMP biosynthesis via de novo pathway; 5-formamido-1-(5-phospho-D-ribosyl)imidazole-4-carboxamide from 5-amino-1-(5-phospho-D-ribosyl)imidazole-4-carboxamide (10-formyl THF route): step 1/1. Its pathway is purine metabolism; IMP biosynthesis via de novo pathway; IMP from 5-formamido-1-(5-phospho-D-ribosyl)imidazole-4-carboxamide: step 1/1. This Burkholderia lata (strain ATCC 17760 / DSM 23089 / LMG 22485 / NCIMB 9086 / R18194 / 383) protein is Bifunctional purine biosynthesis protein PurH.